A 596-amino-acid chain; its full sequence is Deuterosome assembly protein 1 (596 aa).

Coiled coils occupy residues 8 to 68, 130 to 180, and 227 to 284; these read IARN…NHEI, CELQ…FQKE, and IENL…DLLR. A compositionally biased stretch (polar residues) spans 297–306; the sequence is TANLANQKTA. Residues 297-316 are disordered; that stretch reads TANLANQKTAQGEEASFQVT. Residues 337–402 are a coiled coil; sequence SEKYQAENDL…LKGAQNRQTS (66 aa). Residues 447-467 form a disordered region; that stretch reads DKPQKHRSFHGENNSLKPTNY. Positions 457–467 are enriched in polar residues; it reads GENNSLKPTNY.

This sequence belongs to the CEP63 family.

It localises to the cytoplasm. Its function is as follows. Key structural component of the deuterosome, a structure that promotes de novo centriole amplification in multiciliated cells. Deuterosome-mediated centriole amplification occurs in terminally differentiated multiciliated cells and can generate more than 100 centrioles. Probably sufficient for the specification and formation of the deuterosome inner core. In Xenopus tropicalis (Western clawed frog), this protein is Deuterosome assembly protein 1.